Reading from the N-terminus, the 299-residue chain is UDP-3-O-acyl-N-acetylglucosamine deacetylase (299 aa).

3 residues coordinate Zn(2+): His75, His232, and Asp236. Residue His259 is the Proton donor of the active site.

It belongs to the LpxC family. Zn(2+) is required as a cofactor.

It carries out the reaction a UDP-3-O-[(3R)-3-hydroxyacyl]-N-acetyl-alpha-D-glucosamine + H2O = a UDP-3-O-[(3R)-3-hydroxyacyl]-alpha-D-glucosamine + acetate. It functions in the pathway glycolipid biosynthesis; lipid IV(A) biosynthesis; lipid IV(A) from (3R)-3-hydroxytetradecanoyl-[acyl-carrier-protein] and UDP-N-acetyl-alpha-D-glucosamine: step 2/6. Catalyzes the hydrolysis of UDP-3-O-myristoyl-N-acetylglucosamine to form UDP-3-O-myristoylglucosamine and acetate, the committed step in lipid A biosynthesis. This chain is UDP-3-O-acyl-N-acetylglucosamine deacetylase, found in Helicobacter hepaticus (strain ATCC 51449 / 3B1).